An 89-amino-acid polypeptide reads, in one-letter code: Putative membrane protein insertion efficiency factor (89 aa).

It belongs to the UPF0161 family.

Its subcellular location is the cell inner membrane. In terms of biological role, could be involved in insertion of integral membrane proteins into the membrane. The chain is Putative membrane protein insertion efficiency factor from Petrotoga mobilis (strain DSM 10674 / SJ95).